Here is a 216-residue protein sequence, read N- to C-terminus: Pyrophosphatase PpaX (216 aa).

Residue Asp12 is the Nucleophile of the active site.

Belongs to the HAD-like hydrolase superfamily. PpaX family. It depends on Mg(2+) as a cofactor.

The catalysed reaction is diphosphate + H2O = 2 phosphate + H(+). Its function is as follows. Hydrolyzes pyrophosphate formed during P-Ser-HPr dephosphorylation by HPrK/P. Might play a role in controlling the intracellular pyrophosphate pool. The polypeptide is Pyrophosphatase PpaX (Bacillus pumilus (strain SAFR-032)).